Here is a 431-residue protein sequence, read N- to C-terminus: Fibrinogen C domain-containing protein 1 (431 aa).

The Cytoplasmic segment spans residues 1–3 (MLC). Residues 4–24 (TVLLALAVLLAVAVTGAVLFL) traverse the membrane as a helical; Signal-anchor for type II membrane protein segment. Residues 25-431 (NHTHTPGTAP…MKIRPVREDR (407 aa)) lie on the Extracellular side of the membrane. A Fibrinogen C-terminal domain is found at 205 to 428 (CATGSRPRDC…FSEMKIRPVR (224 aa)). The cysteines at positions 214 and 243 are disulfide-linked. Asn-310 carries N-linked (GlcNAc...) asparagine glycosylation. Residues Asp-363 and Asp-365 each coordinate Ca(2+). A disulfide bond links Cys-371 and Cys-384.

In terms of assembly, homotetramer; disulfide-linked.

The protein localises to the membrane. Its function is as follows. Acetyl group-binding receptor which shows a high-affinity and calcium-dependent binding to acetylated structures such as chitin, some N-acetylated carbohydrates, and amino acids, but not to their non-acetylated counterparts. Can facilitate the endocytosis of acetylated components. This Macaca fascicularis (Crab-eating macaque) protein is Fibrinogen C domain-containing protein 1 (FIBCD1).